The following is a 146-amino-acid chain: Histone H2B (146 aa).

Over residues 1 to 16 the composition is skewed to basic and acidic residues; it reads MAPRADKKPAEKKPGA. The tract at residues 1 to 52 is disordered; it reads MAPRADKKPAEKKPGAEKTPVAEKAPAEKKPRAGKKLPRDAGAAGDKKKKRA. N6-acetyllysine is present on residues Lys7, Lys35, and Lys36. Residue Lys142 forms a Glycyl lysine isopeptide (Lys-Gly) (interchain with G-Cter in ubiquitin) linkage.

The protein belongs to the histone H2B family. In terms of assembly, the nucleosome is a histone octamer containing two molecules each of H2A, H2B, H3 and H4 assembled in one H3-H4 heterotetramer and two H2A-H2B heterodimers. The octamer wraps approximately 147 bp of DNA. Can be acetylated to form H2BK6ac, H2BK33ac and H2BK34ac. Post-translationally, monoubiquitinated to form H2BK143ub1; may give a specific tag for epigenetic transcriptional activation.

The protein localises to the nucleus. Its subcellular location is the chromosome. In terms of biological role, core component of nucleosome. Nucleosomes wrap and compact DNA into chromatin, limiting DNA accessibility to the cellular machineries which require DNA as a template. Histones thereby play a central role in transcription regulation, DNA repair, DNA replication and chromosomal stability. DNA accessibility is regulated via a complex set of post-translational modifications of histones, also called histone code, and nucleosome remodeling. This chain is Histone H2B (HIS2B), found in Nicotiana tabacum (Common tobacco).